Consider the following 549-residue polypeptide: Glucose-6-phosphate isomerase (549 aa).

Glu355 functions as the Proton donor in the catalytic mechanism. Active-site residues include His386 and Lys514.

This sequence belongs to the GPI family.

The protein localises to the cytoplasm. It carries out the reaction alpha-D-glucose 6-phosphate = beta-D-fructose 6-phosphate. The protein operates within carbohydrate biosynthesis; gluconeogenesis. It participates in carbohydrate degradation; glycolysis; D-glyceraldehyde 3-phosphate and glycerone phosphate from D-glucose: step 2/4. In terms of biological role, catalyzes the reversible isomerization of glucose-6-phosphate to fructose-6-phosphate. The chain is Glucose-6-phosphate isomerase from Klebsiella pneumoniae subsp. pneumoniae (strain ATCC 700721 / MGH 78578).